A 326-amino-acid chain; its full sequence is Aquaporin-3 (326 aa).

2 helical membrane passes run 24-44 and 64-84; these read LAEFLGTFLLVLLLNGMIITA and LAFGGGLAVMVAVLVSGGISG. The short motif at 88 to 90 is the NPA 1 element; the sequence is NPA. Residues 107 to 127 form a helical membrane-spanning segment; sequence LVYIFMQYMGAFFAASILYAV. N-linked (GlcNAc...) asparagine glycosylation is present at Asn146. Transmembrane regions (helical) follow at residues 166 to 186 and 196 to 216; these read IFDAILGTGLLVMGIFAIIDP and IPLYVGFLISSLIFSFSYNAG. Residues 220 to 222 carry the NPA 2 motif; it reads NPA. A helical membrane pass occupies residues 247 to 267; the sequence is LWWLVPVIGPHVGGLLGGVTY. An N-linked (GlcNAc...) asparagine glycan is attached at Asn294.

This sequence belongs to the MIP/aquaporin (TC 1.A.8) family.

The protein localises to the cell membrane. Aquaglyceroporin that may modulate the water content and osmolytes during anhydrobiosis. This is Aquaporin-3 from Milnesium tardigradum (Water bear).